The primary structure comprises 304 residues: Ribonuclease Z (304 aa).

Positions 63, 65, 67, 68, 141, 208, and 266 each coordinate Zn(2+). Asp-67 serves as the catalytic Proton acceptor.

This sequence belongs to the RNase Z family. Homodimer. The cofactor is Zn(2+).

It catalyses the reaction Endonucleolytic cleavage of RNA, removing extra 3' nucleotides from tRNA precursor, generating 3' termini of tRNAs. A 3'-hydroxy group is left at the tRNA terminus and a 5'-phosphoryl group is left at the trailer molecule.. Its function is as follows. Zinc phosphodiesterase, which displays some tRNA 3'-processing endonuclease activity. Probably involved in tRNA maturation, by removing a 3'-trailer from precursor tRNA. The polypeptide is Ribonuclease Z (Chlamydia trachomatis serovar L2 (strain ATCC VR-902B / DSM 19102 / 434/Bu)).